A 184-amino-acid polypeptide reads, in one-letter code: MVNIIMVLYSIFLFLPAFIANPGAVITGGHFILDRGKTIHGKRILGDGKSLSGFIGGSLIGVLAGIIVYYIIYISNIGLGNYGNNIISALPVLFAMSFGSLTGDITGSFIKRRLGMKRGAKGSLLDQWPFVLMSFLFIFIFARHFFLEFYGNFIAIILILVLTPPLHRGVNILGYKLKMKDVPW.

5 helical membrane-spanning segments follow: residues 4–24 (IIMV…NPGA), 54–74 (FIGG…IIYI), 86–106 (IISA…GDIT), 122–142 (GSLL…FIFA), and 145–165 (FFLE…LTPP).

The protein belongs to the CDP-archaeol synthase family. It depends on Mg(2+) as a cofactor.

The protein localises to the cell membrane. It carries out the reaction 2,3-bis-O-(geranylgeranyl)-sn-glycerol 1-phosphate + CTP + H(+) = CDP-2,3-bis-O-(geranylgeranyl)-sn-glycerol + diphosphate. It participates in membrane lipid metabolism; glycerophospholipid metabolism. Its function is as follows. Catalyzes the formation of CDP-2,3-bis-(O-geranylgeranyl)-sn-glycerol (CDP-archaeol) from 2,3-bis-(O-geranylgeranyl)-sn-glycerol 1-phosphate (DGGGP) and CTP. This reaction is the third ether-bond-formation step in the biosynthesis of archaeal membrane lipids. In Picrophilus torridus (strain ATCC 700027 / DSM 9790 / JCM 10055 / NBRC 100828 / KAW 2/3), this protein is CDP-archaeol synthase.